A 410-amino-acid chain; its full sequence is Na(+)/H(+) antiporter NhaA 1/4 (410 aa).

Helical transmembrane passes span 16 to 36 (VGGS…NSPL), 55 to 75 (LNLS…FFIV), 95 to 115 (ALPI…FLAF), 125 to 145 (GGWG…LAVV), 156 to 176 (FLLT…AVAC), 178 to 198 (SGIN…FGYL), 215 to 235 (AWLL…ACGV), 275 to 295 (IALP…AGGF), 299 to 319 (AITW…IFGG), 340 to 360 (IAGI…IAEL), and 371 to 391 (AKGA…LLLG).

The protein belongs to the NhaA Na(+)/H(+) (TC 2.A.33) antiporter family.

The protein resides in the cell membrane. It carries out the reaction Na(+)(in) + 2 H(+)(out) = Na(+)(out) + 2 H(+)(in). Functionally, na(+)/H(+) antiporter that extrudes sodium in exchange for external protons. The sequence is that of Na(+)/H(+) antiporter NhaA 1/4 from Streptomyces coelicolor (strain ATCC BAA-471 / A3(2) / M145).